The primary structure comprises 502 residues: Lysine--tRNA ligase (502 aa).

The Mg(2+) site is built by Glu413 and Glu420.

It belongs to the class-II aminoacyl-tRNA synthetase family. Homodimer. Requires Mg(2+) as cofactor.

It localises to the cytoplasm. It carries out the reaction tRNA(Lys) + L-lysine + ATP = L-lysyl-tRNA(Lys) + AMP + diphosphate. In Haemophilus influenzae (strain PittEE), this protein is Lysine--tRNA ligase.